The following is a 225-amino-acid chain: MALSMYHYIAREWKKPYEGLHGELMKARLLEWRRQPSILRVEKPTRLDRARALGYKAKQGVIVARVRVRKGGRRKPRPNKGRRPKRMGVYGFAPAKSLRLIAEERAQRKYPNLVVLNSYYVGEDGRYKWYEVILVDPNHPAIKNDPELNWVTTGKHKGRPFRGLTSAGKKMRGLRKSRGLKGTHKYKWKKKAKERILRKRHEASRGARLIEPDEIREKFHKGDLT.

The segment at 159–180 (RPFRGLTSAGKKMRGLRKSRGL) is disordered. Positions 169–180 (KKMRGLRKSRGL) are enriched in basic residues.

It belongs to the eukaryotic ribosomal protein eL15 family.

In Aeropyrum pernix (strain ATCC 700893 / DSM 11879 / JCM 9820 / NBRC 100138 / K1), this protein is Large ribosomal subunit protein eL15 (rpl15e).